Here is a 119-residue protein sequence, read N- to C-terminus: Small ribosomal subunit protein uS10 (119 aa).

At A2 the chain carries N-acetylalanine. Residue K4 forms a Glycyl lysine isopeptide (Lys-Gly) (interchain with G-Cter in ubiquitin) linkage. An N6-succinyllysine; alternate modification is found at K8. Residue K8 forms a Glycyl lysine isopeptide (Lys-Gly) (interchain with G-Cter in ubiquitin); alternate linkage. T9 carries the post-translational modification Phosphothreonine. 2 positions are modified to N6-acetyllysine: K34 and K75. S93 carries the phosphoserine modification.

Belongs to the universal ribosomal protein uS10 family. Component of the 40S small ribosomal subunit. Polyubiquitinated by ZNF598 via 'Lys-63'-linked ubiquitin chains when a ribosome has stalled, initiating the ribosome quality control (RQC) pathway to degrade the potentially detrimental aberrant nascent polypeptide. Deubiquitinated by OTUD3 and USP21, antagonizing ZNF598 activity. In terms of processing, ufmylated by UFL1.

Its subcellular location is the cytoplasm. Its function is as follows. Component of the small ribosomal subunit. The ribosome is a large ribonucleoprotein complex responsible for the synthesis of proteins in the cell. The chain is Small ribosomal subunit protein uS10 (Rps20) from Rattus norvegicus (Rat).